The sequence spans 317 residues: Ribosomal protein L11 methyltransferase (317 aa).

4 residues coordinate S-adenosyl-L-methionine: Thr158, Gly179, Asp201, and Asn244.

The protein belongs to the methyltransferase superfamily. PrmA family.

It is found in the cytoplasm. It carries out the reaction L-lysyl-[protein] + 3 S-adenosyl-L-methionine = N(6),N(6),N(6)-trimethyl-L-lysyl-[protein] + 3 S-adenosyl-L-homocysteine + 3 H(+). Methylates ribosomal protein L11. The sequence is that of Ribosomal protein L11 methyltransferase from Streptococcus equi subsp. zooepidemicus (strain H70).